The sequence spans 362 residues: MSHNTFGHLFRVTTWGESHGAALGCVIDGCPPGIIFTLAEIQAYLDKRRPGQSKYTTQRQEQDQVELLSGAITQEDGTTFVTTGTPISLLIRNTDQRSQDYGKIAHQYRPGHADYTYDVKYGIRDFRGGGRASARETAARVAAGALARKVVPHLVVRGAVIAIGPHHINRDRWDWSEVENNPFFTADAEMVQIFSDYIRKIRKDGTSVGAVIEIVAENVPAGLGAPIYAKLDQDIASLLMSINAVKGVEIGDGFAAARLRGEENADEMRMGNDGKPLFLSNHAGGILGGISSGQPIIARFAVKPTSSILTPRRSIDVDGHDVDVITKGRHDPCVGIRAVPVGEAMVACALADHYLRHRGQVG.

Arg48 is a binding site for NADP(+). FMN contacts are provided by residues 131–133 (RAS), 243–244 (NA), Gly288, 303–307 (KPTSS), and Arg329.

It belongs to the chorismate synthase family. As to quaternary structure, homotetramer. FMNH2 is required as a cofactor.

It catalyses the reaction 5-O-(1-carboxyvinyl)-3-phosphoshikimate = chorismate + phosphate. It functions in the pathway metabolic intermediate biosynthesis; chorismate biosynthesis; chorismate from D-erythrose 4-phosphate and phosphoenolpyruvate: step 7/7. Functionally, catalyzes the anti-1,4-elimination of the C-3 phosphate and the C-6 proR hydrogen from 5-enolpyruvylshikimate-3-phosphate (EPSP) to yield chorismate, which is the branch point compound that serves as the starting substrate for the three terminal pathways of aromatic amino acid biosynthesis. This reaction introduces a second double bond into the aromatic ring system. The protein is Chorismate synthase of Bartonella tribocorum (strain CIP 105476 / IBS 506).